The sequence spans 457 residues: tRNA-2-methylthio-N(6)-dimethylallyladenosine synthase (457 aa).

The 118-residue stretch at 3-120 folds into the MTTase N-terminal domain; that stretch reads KKVYVKTFGC…LPQMIDKRRE (118 aa). 6 residues coordinate [4Fe-4S] cluster: C12, C49, C83, C157, C161, and C164. In terms of domain architecture, Radical SAM core spans 143-377; that stretch reads RVDGPSAFVS…QATIEENVQR (235 aa). In terms of domain architecture, TRAM spans 380-447; the sequence is DSMVGKIERI…PHSLRGELVL (68 aa).

Belongs to the methylthiotransferase family. MiaB subfamily. As to quaternary structure, monomer. Requires [4Fe-4S] cluster as cofactor.

It localises to the cytoplasm. The catalysed reaction is N(6)-dimethylallyladenosine(37) in tRNA + (sulfur carrier)-SH + AH2 + 2 S-adenosyl-L-methionine = 2-methylsulfanyl-N(6)-dimethylallyladenosine(37) in tRNA + (sulfur carrier)-H + 5'-deoxyadenosine + L-methionine + A + S-adenosyl-L-homocysteine + 2 H(+). Its function is as follows. Catalyzes the methylthiolation of N6-(dimethylallyl)adenosine (i(6)A), leading to the formation of 2-methylthio-N6-(dimethylallyl)adenosine (ms(2)i(6)A) at position 37 in tRNAs that read codons beginning with uridine. This Paraburkholderia phytofirmans (strain DSM 17436 / LMG 22146 / PsJN) (Burkholderia phytofirmans) protein is tRNA-2-methylthio-N(6)-dimethylallyladenosine synthase.